A 213-amino-acid chain; its full sequence is Uridine kinase (213 aa).

Residue 13-20 (GGSCSGKT) participates in ATP binding.

It belongs to the uridine kinase family.

It is found in the cytoplasm. The catalysed reaction is uridine + ATP = UMP + ADP + H(+). It catalyses the reaction cytidine + ATP = CMP + ADP + H(+). It functions in the pathway pyrimidine metabolism; CTP biosynthesis via salvage pathway; CTP from cytidine: step 1/3. Its pathway is pyrimidine metabolism; UMP biosynthesis via salvage pathway; UMP from uridine: step 1/1. In Mycoplasma pneumoniae (strain ATCC 29342 / M129 / Subtype 1) (Mycoplasmoides pneumoniae), this protein is Uridine kinase (udk).